The chain runs to 251 residues: Ditrans,polycis-undecaprenyl-diphosphate synthase ((2E,6E)-farnesyl-diphosphate specific) (251 aa).

Residue aspartate 19 is part of the active site. Mg(2+) is bound at residue aspartate 19. Residues 20–23 (GNNR), tryptophan 24, histidine 36, and 64–66 (SSE) contribute to the substrate site. Asparagine 67 serves as the catalytic Proton acceptor. Residues tryptophan 68, arginine 70, arginine 187, and 193–195 (RIS) contribute to the substrate site. Glutamate 206 contributes to the Mg(2+) binding site.

The protein belongs to the UPP synthase family. As to quaternary structure, homodimer. Requires Mg(2+) as cofactor.

The catalysed reaction is 8 isopentenyl diphosphate + (2E,6E)-farnesyl diphosphate = di-trans,octa-cis-undecaprenyl diphosphate + 8 diphosphate. Its function is as follows. Catalyzes the sequential condensation of isopentenyl diphosphate (IPP) with (2E,6E)-farnesyl diphosphate (E,E-FPP) to yield (2Z,6Z,10Z,14Z,18Z,22Z,26Z,30Z,34E,38E)-undecaprenyl diphosphate (di-trans,octa-cis-UPP). UPP is the precursor of glycosyl carrier lipid in the biosynthesis of bacterial cell wall polysaccharide components such as peptidoglycan and lipopolysaccharide. In Pseudomonas aeruginosa (strain ATCC 15692 / DSM 22644 / CIP 104116 / JCM 14847 / LMG 12228 / 1C / PRS 101 / PAO1), this protein is Ditrans,polycis-undecaprenyl-diphosphate synthase ((2E,6E)-farnesyl-diphosphate specific).